The following is a 216-amino-acid chain: Cyclin-U4-2 (216 aa).

It belongs to the cyclin family. Cyclin U/P subfamily. As to quaternary structure, interacts with CDKA-1. Expressed in roots, stems and flowers. Expressed in the shoot apex, leaf primordia and young leaves.

The protein is Cyclin-U4-2 (CYCU4-2) of Arabidopsis thaliana (Mouse-ear cress).